Consider the following 317-residue polypeptide: Gamma-glutamyl hydrolase (317 aa).

Residues 1–24 form the signal peptide; that stretch reads MASLGRLLCAWVLLLCGLASPGLS. Residues 25-317 form the Gamma-glutamyl hydrolase domain; sequence GSYERGSKRP…SSFQQAYMFN (293 aa). Asn-46 and Asn-100 each carry an N-linked (GlcNAc...) asparagine glycan. Cys-133 functions as the Nucleophile in the catalytic mechanism. N-linked (GlcNAc...) asparagine glycosylation is found at Asn-153, Asn-162, Asn-188, and Asn-202. His-243 acts as the Proton donor in catalysis. Asn-306 carries N-linked (GlcNAc...) asparagine glycosylation.

The protein belongs to the peptidase C26 family. In terms of assembly, homodimer.

It is found in the secreted. The protein resides in the extracellular space. It localises to the lysosome. The protein localises to the melanosome. The enzyme catalyses (6S)-5,6,7,8-tetrahydrofolyl-(gamma-L-Glu)(n) + (n-1) H2O = (6S)-5,6,7,8-tetrahydrofolate + (n-1) L-glutamate. Its activity is regulated as follows. Activity is altered by insulin and estrogen. In terms of biological role, hydrolyzes the polyglutamate sidechains of pteroylpolyglutamates. Progressively removes gamma-glutamyl residues from pteroylpoly-gamma-glutamate to yield pteroyl-alpha-glutamate (folic acid) and free glutamate. May play an important role in the bioavailability of dietary pteroylpolyglutamates and in the metabolism of pteroylpolyglutamates and antifolates. Exhibits either endo- or exopeptidase activity depending upon the tissue of origin. When secreted, it acts primarily as an endopeptidase. This chain is Gamma-glutamyl hydrolase (Ggh), found in Rattus norvegicus (Rat).